Here is a 354-residue protein sequence, read N- to C-terminus: Ferrochelatase (354 aa).

2 residues coordinate Fe cation: histidine 214 and glutamate 295.

Belongs to the ferrochelatase family.

Its subcellular location is the cytoplasm. It carries out the reaction heme b + 2 H(+) = protoporphyrin IX + Fe(2+). It participates in porphyrin-containing compound metabolism; protoheme biosynthesis; protoheme from protoporphyrin-IX: step 1/1. Catalyzes the ferrous insertion into protoporphyrin IX. In Burkholderia orbicola (strain AU 1054), this protein is Ferrochelatase.